The sequence spans 551 residues: Putative transport protein CGSHiGG_02670 (551 aa).

The next 5 membrane-spanning stretches (helical) occupy residues 4 to 24, 28 to 48, 65 to 85, 95 to 115, and 157 to 177; these read IAIT…IGHW, GVGL…HFTN, FGLI…FFSS, AFAI…HKIA, and VSYA…MWLI. RCK C-terminal domains are found at residues 191–275 and 277–360; these read RFNA…IIGH and VDAP…VIGN. The next 6 membrane-spanning stretches (helical) occupy residues 370-390, 402-424, 438-458, 463-483, 492-512, and 529-549; these read MLPV…PFYI, AGGP…LYWF, IVLF…DTLV, LEWM…VGTI, YLTI…LAFA, and VYPL…VLLW.

It belongs to the AAE transporter (TC 2.A.81) family. YidE subfamily.

The protein resides in the cell membrane. The protein is Putative transport protein CGSHiGG_02670 of Haemophilus influenzae (strain PittGG).